The following is a 574-amino-acid chain: MLSSVRLAALRAGKTNSVFQAVRAFAAEPAAAATTDAGFVSQVIGPVVDVRFDGELPSILSALEVQGHNVRLVLEVAQHMGDNTVRCVAMDSTDGLVRGQKVVNTGSPIKVPVGRGTLGRIMNVIGEPVDEQGPIECSEVWSIHREAPEFTEQSTEQEILVTGIKVVDLLAPYQRGGKIGLFGGAGVGKTVLIMELINNVAKAHGGFSVFAGVGERTREGNDLYREMIESGVIKLGDKRGESKCTLVYGQMNEPPGARARVALTGLTVAEYFRDVEGQDVLLFVDNIFRFTQANSEVSALLGRIPSAVGYQPTLATDLGGLQERITTTTKGSITSVQAVYVPADDLTDPAPATTFAHLDATTVLSRSIAELGIYPAVDPLDSTSRMLNPNIIGAEHYNIARGVQKVLQDYKNLQDIIAILGMDELSEEDKLTVARARKIQRFLSQPFQVAEVFTGTPGKYVDLKDTISAFTGILQGKYDDLPEMAFYMVGGIHEVVEKADKLAKDVAARKDESKKAKSSEALKDVPSLEKMAGEIKDEVIDADDSLEEDFKAEAISSENMVLNEKGEKVPLPKK.

The transit peptide at 1–26 (MLSSVRLAALRAGKTNSVFQAVRAFA) directs the protein to the mitochondrion. Residue 183-190 (GGAGVGKT) coordinates ATP.

This sequence belongs to the ATPase alpha/beta chains family. F-type ATPases have 2 components, CF(1) - the catalytic core - and CF(0) - the membrane proton channel. CF(1) has five subunits: alpha(3), beta(3), gamma(1), delta(1), epsilon(1). CF(0) has three main subunits: a, b and c.

The protein localises to the mitochondrion. Its subcellular location is the mitochondrion inner membrane. It catalyses the reaction ATP + H2O + 4 H(+)(in) = ADP + phosphate + 5 H(+)(out). Functionally, mitochondrial membrane ATP synthase (F(1)F(0) ATP synthase or Complex V) produces ATP from ADP in the presence of a proton gradient across the membrane which is generated by electron transport complexes of the respiratory chain. F-type ATPases consist of two structural domains, F(1) - containing the extramembraneous catalytic core, and F(0) - containing the membrane proton channel, linked together by a central stalk and a peripheral stalk. During catalysis, ATP synthesis in the catalytic domain of F(1) is coupled via a rotary mechanism of the central stalk subunits to proton translocation. Subunits alpha and beta form the catalytic core in F(1). Rotation of the central stalk against the surrounding alpha(3)beta(3) subunits leads to hydrolysis of ATP in three separate catalytic sites on the beta subunits. The protein is ATP synthase subunit beta, mitochondrial (ATP2) of Chlamydomonas reinhardtii (Chlamydomonas smithii).